We begin with the raw amino-acid sequence, 209 residues long: MPLFRNAQFEISIAKPSGLPPPNGAEIAFAGRSNAGKSSAINTLAGHVRLAYVSKTPGRTQLINFFRLNCGALLVDLPGYGYAAVPEKIRRQWQGLIETYLRTRESLIGLVLMMDSRHPMTDLDRQMIDWFAPSGKPIHVLLTKSDKLSRGPANATLLAVRAELTARYGDQVSVQLFSSLKKTGVEEVEKVVAGWLVPAAAEGEAPAGA.

The region spanning 23 to 198 (NGAEIAFAGR…EKVVAGWLVP (176 aa)) is the EngB-type G domain. GTP-binding positions include 31 to 38 (GRSNAGKS), 58 to 62 (GRTQL), 76 to 79 (DLPG), 143 to 146 (TKSD), and 177 to 179 (FSS). Ser38 and Thr60 together coordinate Mg(2+).

It belongs to the TRAFAC class TrmE-Era-EngA-EngB-Septin-like GTPase superfamily. EngB GTPase family. It depends on Mg(2+) as a cofactor.

Necessary for normal cell division and for the maintenance of normal septation. This Azoarcus sp. (strain BH72) protein is Probable GTP-binding protein EngB.